The primary structure comprises 104 residues: L-rhamnose mutarotase (104 aa).

Tyr18 serves as a coordination point for substrate. Catalysis depends on His22, which acts as the Proton donor. Substrate-binding positions include Tyr41 and 76-77 (WW).

This sequence belongs to the rhamnose mutarotase family. As to quaternary structure, homodimer.

It is found in the cytoplasm. The catalysed reaction is alpha-L-rhamnose = beta-L-rhamnose. The protein operates within carbohydrate metabolism; L-rhamnose metabolism. Involved in the anomeric conversion of L-rhamnose. The protein is L-rhamnose mutarotase of Salmonella arizonae (strain ATCC BAA-731 / CDC346-86 / RSK2980).